The following is a 176-amino-acid chain: ATP-dependent protease subunit HslV (176 aa).

The active site involves threonine 5. Glycine 161, cysteine 164, and threonine 167 together coordinate Na(+).

Belongs to the peptidase T1B family. HslV subfamily. In terms of assembly, a double ring-shaped homohexamer of HslV is capped on each side by a ring-shaped HslU homohexamer. The assembly of the HslU/HslV complex is dependent on binding of ATP.

The protein localises to the cytoplasm. The catalysed reaction is ATP-dependent cleavage of peptide bonds with broad specificity.. With respect to regulation, allosterically activated by HslU binding. In terms of biological role, protease subunit of a proteasome-like degradation complex believed to be a general protein degrading machinery. The sequence is that of ATP-dependent protease subunit HslV from Sulfurovum sp. (strain NBC37-1).